Consider the following 450-residue polypeptide: Phosphoglucosamine mutase 2 (450 aa).

The active-site Phosphoserine intermediate is S101. Mg(2+) is bound by residues S101, D245, D247, and D249. S101 carries the post-translational modification Phosphoserine.

Belongs to the phosphohexose mutase family. It depends on Mg(2+) as a cofactor. Activated by phosphorylation.

The enzyme catalyses alpha-D-glucosamine 1-phosphate = D-glucosamine 6-phosphate. Functionally, catalyzes the conversion of glucosamine-6-phosphate to glucosamine-1-phosphate. This is Phosphoglucosamine mutase 2 from Shewanella frigidimarina (strain NCIMB 400).